Reading from the N-terminus, the 551-residue chain is ATP-dependent DNA helicase XPD (551 aa).

The Helicase ATP-binding domain occupies 1–228; the sequence is MLKLRDWQEK…KLLNQLREVV (228 aa). An ATP-binding site is contributed by 29–36; sequence APTGSGKT. The [4Fe-4S] cluster site is built by Cys-88, Cys-102, Cys-105, and Cys-137. Residues 180 to 183 carry the DEAH box motif; sequence DEAH.

The protein belongs to the helicase family. RAD3/XPD subfamily. In terms of assembly, monomer. The cofactor is [4Fe-4S] cluster.

The catalysed reaction is Couples ATP hydrolysis with the unwinding of duplex DNA at the replication fork by translocating in the 5'-3' direction. This creates two antiparallel DNA single strands (ssDNA). The leading ssDNA polymer is the template for DNA polymerase III holoenzyme which synthesizes a continuous strand.. It carries out the reaction ATP + H2O = ADP + phosphate + H(+). Its function is as follows. ATP-dependent 5'-3' DNA helicase. Thought to be involved in nucleotide excision repair (NER) of DNA. This is ATP-dependent DNA helicase XPD from Sulfolobus acidocaldarius (strain ATCC 33909 / DSM 639 / JCM 8929 / NBRC 15157 / NCIMB 11770).